The primary structure comprises 202 residues: Putative NAD(P)H nitroreductase YodC (202 aa).

Residues 11-13, 68-70, 155-156, and Arg-192 each bind FMN; these read RAS, QKQ, and GG.

The protein belongs to the nitroreductase family. It depends on FMN as a cofactor.

Its subcellular location is the cytoplasm. Its function is as follows. Putative nitroreductase that may contribute to the degradation of aromatic compounds. This is Putative NAD(P)H nitroreductase YodC (yodC) from Bacillus subtilis (strain 168).